The following is a 599-amino-acid chain: Laccase-2 (599 aa).

Positions 1–19 (MARSTTSLFALSLVASAFA) are cleaved as a signal peptide. 2 consecutive Plastocyanin-like domains span residues 21–145 (VVDY…IVIY) and 157–307 (VDDE…LVYE). Histidine 82, histidine 84, histidine 127, and histidine 129 together coordinate Cu cation. An intrachain disulfide couples cysteine 103 to cysteine 588. 5 N-linked (GlcNAc...) asparagine glycosylation sites follow: asparagine 207, asparagine 208, asparagine 231, asparagine 397, and asparagine 443. The Plastocyanin-like 3 domain maps to 450-567 (DVPTLLKILT…EGFAMVFAEA (118 aa)). 7 residues coordinate Cu cation: histidine 497, histidine 500, histidine 502, histidine 549, cysteine 550, histidine 551, and histidine 555.

It belongs to the multicopper oxidase family. Homodimer. The cofactor is Cu cation. In mycelia, at a lower level than LCC4.

The protein resides in the secreted. The catalysed reaction is 4 hydroquinone + O2 = 4 benzosemiquinone + 2 H2O. Functionally, lignin degradation and detoxification of lignin-derived products. This Thanatephorus cucumeris (Black scurf of potato) protein is Laccase-2 (LCC2).